The primary structure comprises 149 residues: uncharacterized protein (149 aa).

Residues 124 to 144 (IIIIALIIILANYAPSIIGKI) traverse the membrane as a helical segment.

Belongs to the M.jannaschii MJ0023/MJ0349/MJ1072/MJ1074/MJ1107/MJECL16 family.

The protein resides in the membrane. This is an uncharacterized protein from Methanocaldococcus jannaschii (strain ATCC 43067 / DSM 2661 / JAL-1 / JCM 10045 / NBRC 100440) (Methanococcus jannaschii).